A 788-amino-acid chain; its full sequence is Putative wall-associated receptor kinase-like 11 (788 aa).

The N-terminal stretch at 1-27 (MRCDNNYSFSILFSLLLILILDSKVVS) is a signal peptide. The Extracellular portion of the chain corresponds to 28–375 (LSTSCQSKSV…TFNCIGNKTR (348 aa)). N-linked (GlcNAc...) asparagine glycans are attached at residues asparagine 65, asparagine 80, asparagine 121, asparagine 159, asparagine 233, asparagine 253, asparagine 278, asparagine 295, and asparagine 310. Residues 306 to 369 (CICNNVTISG…CVNLPGTFNC (64 aa)) are atypical EGF-like. Cystine bridges form between cysteine 308-cysteine 321, cysteine 343-cysteine 360, and cysteine 354-cysteine 369. N-linked (GlcNAc...) asparagine glycosylation occurs at asparagine 372. A helical transmembrane segment spans residues 376-396 (VTMIGVGSAFGILVLVVGIWW). Over 397-788 (LRKFLKKRRM…QPLFPHPTWI (392 aa)) the chain is Cytoplasmic. A Protein kinase domain is found at 451–726 (FSESRILGQG…KVFTDLEKIL (276 aa)). ATP-binding positions include 457 to 465 (LGQGGQGTV) and lysine 479. Residue tyrosine 524 is modified to Phosphotyrosine. Residue aspartate 576 is the Proton acceptor of the active site. Phosphothreonine is present on residues threonine 610 and threonine 615. At tyrosine 623 the chain carries Phosphotyrosine.

This sequence belongs to the protein kinase superfamily. Ser/Thr protein kinase family.

Its subcellular location is the membrane. The enzyme catalyses L-seryl-[protein] + ATP = O-phospho-L-seryl-[protein] + ADP + H(+). The catalysed reaction is L-threonyl-[protein] + ATP = O-phospho-L-threonyl-[protein] + ADP + H(+). In terms of biological role, putative serine/threonine-protein kinase that may function as a signaling receptor of extracellular matrix component. In Arabidopsis thaliana (Mouse-ear cress), this protein is Putative wall-associated receptor kinase-like 11 (WAKL11).